We begin with the raw amino-acid sequence, 422 residues long: Phytoene synthase 1, chloroplastic (422 aa).

The transit peptide at 1–70 directs the protein to the chloroplast; it reads MSSSVAVLWV…NRSRRIGVVS (70 aa).

The protein belongs to the phytoene/squalene synthase family. Monomer. Interacts with OR. Interacts with ORLIKE.

The protein localises to the plastid. Its subcellular location is the chloroplast membrane. It carries out the reaction 2 (2E,6E,10E)-geranylgeranyl diphosphate = 15-cis-phytoene + 2 diphosphate. It participates in carotenoid biosynthesis; phytoene biosynthesis; all-trans-phytoene from geranylgeranyl diphosphate: step 1/1. Its function is as follows. Catalyzes the reaction from prephytoene diphosphate to phytoene. This is Phytoene synthase 1, chloroplastic from Arabidopsis thaliana (Mouse-ear cress).